We begin with the raw amino-acid sequence, 481 residues long: Aspartyl/glutamyl-tRNA(Asn/Gln) amidotransferase subunit B (481 aa).

This sequence belongs to the GatB/GatE family. GatB subfamily. In terms of assembly, heterotrimer of A, B and C subunits.

It catalyses the reaction L-glutamyl-tRNA(Gln) + L-glutamine + ATP + H2O = L-glutaminyl-tRNA(Gln) + L-glutamate + ADP + phosphate + H(+). The enzyme catalyses L-aspartyl-tRNA(Asn) + L-glutamine + ATP + H2O = L-asparaginyl-tRNA(Asn) + L-glutamate + ADP + phosphate + 2 H(+). Allows the formation of correctly charged Asn-tRNA(Asn) or Gln-tRNA(Gln) through the transamidation of misacylated Asp-tRNA(Asn) or Glu-tRNA(Gln) in organisms which lack either or both of asparaginyl-tRNA or glutaminyl-tRNA synthetases. The reaction takes place in the presence of glutamine and ATP through an activated phospho-Asp-tRNA(Asn) or phospho-Glu-tRNA(Gln). The protein is Aspartyl/glutamyl-tRNA(Asn/Gln) amidotransferase subunit B of Ehrlichia ruminantium (strain Gardel).